Here is an 81-residue protein sequence, read N- to C-terminus: Sulfur carrier protein TusA (81 aa).

C19 (cysteine persulfide intermediate) is an active-site residue.

It belongs to the sulfur carrier protein TusA family. As to quaternary structure, interacts with IscS.

The protein localises to the cytoplasm. Its pathway is tRNA modification. In terms of biological role, sulfur carrier protein involved in sulfur trafficking in the cell. Part of a sulfur-relay system required for 2-thiolation during synthesis of 2-thiouridine of the modified wobble base 5-methylaminomethyl-2-thiouridine (mnm(5)s(2)U) in tRNA. Interacts with IscS and stimulates its cysteine desulfurase activity. Accepts an activated sulfur from IscS, which is then transferred to TusD, and thus determines the direction of sulfur flow from IscS to 2-thiouridine formation. Also appears to be involved in sulfur transfer for the biosynthesis of molybdopterin. This is Sulfur carrier protein TusA from Salmonella choleraesuis (strain SC-B67).